A 252-amino-acid polypeptide reads, in one-letter code: tRNA (guanine-N(1)-)-methyltransferase (252 aa).

Residues glycine 113 and 133-138 contribute to the S-adenosyl-L-methionine site; that span reads LGDYVL.

This sequence belongs to the RNA methyltransferase TrmD family. In terms of assembly, homodimer.

It localises to the cytoplasm. It carries out the reaction guanosine(37) in tRNA + S-adenosyl-L-methionine = N(1)-methylguanosine(37) in tRNA + S-adenosyl-L-homocysteine + H(+). Functionally, specifically methylates guanosine-37 in various tRNAs. The polypeptide is tRNA (guanine-N(1)-)-methyltransferase (Stenotrophomonas maltophilia (strain R551-3)).